We begin with the raw amino-acid sequence, 265 residues long: Molybdenum-pterin-binding protein MopA (265 aa).

Mop domains follow at residues 126–192 (RTSN…MLAA) and 198–264 (RISA…ILAM).

Belongs to the ModE family.

The sequence is that of Molybdenum-pterin-binding protein MopA (mopA) from Rhodobacter capsulatus (Rhodopseudomonas capsulata).